A 185-amino-acid chain; its full sequence is Small ribosomal subunit protein uS7 (185 aa).

The protein belongs to the universal ribosomal protein uS7 family. Part of the 30S ribosomal subunit.

Functionally, one of the primary rRNA binding proteins, it binds directly to 16S rRNA where it nucleates assembly of the head domain of the 30S subunit. Is located at the subunit interface close to the decoding center. This is Small ribosomal subunit protein uS7 from Methanosarcina barkeri (strain Fusaro / DSM 804).